Consider the following 341-residue polypeptide: Putative gustatory receptor 9a (341 aa).

Position 1 (Met1) is a topological domain, cytoplasmic. The chain crosses the membrane as a helical span at residues 2 to 22 (SLWLEHFLTGYFQLCGLVCGW). The Extracellular portion of the chain corresponds to 23–30 (SGSRLGRL). The helical transmembrane segment at 31-51 (LSSTFLVLILIELVGEIETYF) threads the bilayer. Residues 52 to 68 (TEENPDNESVPAYFAKV) lie on the Cytoplasmic side of the membrane. Residues 69-89 (IMGVNMAYKMIHAWIALSALF) traverse the membrane as a helical segment. The Extracellular segment spans residues 90 to 113 (ECRRFRYLLEELPPVKATSFIYRH). A helical membrane pass occupies residues 114–134 (LILEIILFACNAFLVLSEYTI). Over 135 to 202 (RGIYLENLRY…LAKVTRSLSH (68 aa)) the chain is Cytoplasmic. The helical transmembrane segment at 203–223 (LFGLSLLLLNVLCLGDWIIVC) threads the bilayer. Residues 224–233 (NVYFMVAYLQ) are Extracellular-facing. Residues 234–254 (VLPATLFLFGQVMFVVCPTLI) form a helical membrane-spanning segment. The Cytoplasmic segment spans residues 255–318 (KIWSICAASH…GIYHLNLQTL (64 aa)). Residues 319–339 (AGMFFFILEALVIFLQFVSLV) form a helical membrane-spanning segment. Residues 340 to 341 (RT) lie on the Extracellular side of the membrane.

This sequence belongs to the insect chemoreceptor superfamily. Gustatory receptor (GR) family. Gr2a subfamily. In terms of tissue distribution, expressed in neurons of the terminal external chemosensory organ of larvae.

It is found in the cell membrane. Functionally, probable gustatory receptor which mediates acceptance or avoidance behavior, depending on its substrates. The sequence is that of Putative gustatory receptor 9a (Gr9a) from Drosophila melanogaster (Fruit fly).